The chain runs to 1033 residues: Error-prone DNA polymerase (1033 aa).

The protein belongs to the DNA polymerase type-C family. DnaE2 subfamily.

Its subcellular location is the cytoplasm. It catalyses the reaction DNA(n) + a 2'-deoxyribonucleoside 5'-triphosphate = DNA(n+1) + diphosphate. Functionally, DNA polymerase involved in damage-induced mutagenesis and translesion synthesis (TLS). It is not the major replicative DNA polymerase. The sequence is that of Error-prone DNA polymerase from Teredinibacter turnerae (strain ATCC 39867 / T7901).